Consider the following 243-residue polypeptide: NAD-dependent protein deacetylase (243 aa).

Residues 1-243 (MRNDLETLKH…VSVVKSLMTE (243 aa)) enclose the Deacetylase sirtuin-type domain. Positions 24, 35, 36, 105, 107, 108, and 123 each coordinate NAD(+). Phe35 contacts nicotinamide. Nicotinamide contacts are provided by Ile107 and Asp108. Residue His123 is the Proton acceptor of the active site. The Zn(2+) site is built by Cys131, Cys134, Cys151, and Cys154. NAD(+)-binding residues include Ser192, Ser193, Asn215, and Asp232.

The protein belongs to the sirtuin family. Class U subfamily. It depends on Zn(2+) as a cofactor.

It localises to the cytoplasm. It catalyses the reaction N(6)-acetyl-L-lysyl-[protein] + NAD(+) + H2O = 2''-O-acetyl-ADP-D-ribose + nicotinamide + L-lysyl-[protein]. Functionally, NAD-dependent protein deacetylase which modulates the activities of several enzymes which are inactive in their acetylated form. This Staphylococcus aureus (strain MSSA476) protein is NAD-dependent protein deacetylase.